The primary structure comprises 221 residues: Cytidylate kinase 1 (221 aa).

7 to 15 contributes to the ATP binding site; that stretch reads GPSASGKSS.

It belongs to the cytidylate kinase family. Type 1 subfamily.

The protein localises to the cytoplasm. It carries out the reaction CMP + ATP = CDP + ADP. The catalysed reaction is dCMP + ATP = dCDP + ADP. This is Cytidylate kinase 1 from Borreliella afzelii (strain PKo) (Borrelia afzelii).